Consider the following 462-residue polypeptide: Fumarate hydratase class II (462 aa).

Substrate contacts are provided by residues 97-99 (SGT), 127-130 (HPND), 137-139 (SSN), and Thr-185. His-186 (proton donor/acceptor) is an active-site residue. The active site involves Ser-316. Residues Ser-317 and 322–324 (KVN) each bind substrate.

The protein belongs to the class-II fumarase/aspartase family. Fumarase subfamily. Homotetramer.

The protein localises to the cytoplasm. It carries out the reaction (S)-malate = fumarate + H2O. It participates in carbohydrate metabolism; tricarboxylic acid cycle; (S)-malate from fumarate: step 1/1. In terms of biological role, involved in the TCA cycle. Catalyzes the stereospecific interconversion of fumarate to L-malate. The sequence is that of Fumarate hydratase class II from Bacillus cereus (strain ATCC 14579 / DSM 31 / CCUG 7414 / JCM 2152 / NBRC 15305 / NCIMB 9373 / NCTC 2599 / NRRL B-3711).